A 1883-amino-acid chain; its full sequence is Endoribonuclease Dicer homolog 1 (1883 aa).

3 disordered regions span residues 71 to 97 (AESS…PELP), 129 to 188 (ARKE…DDRR), and 221 to 262 (RSGT…EKPV). Residues 75–96 (PAPPPPPPPPLPEPVPVAPPEL) show a composition bias toward pro residues. Composition is skewed to basic and acidic residues over residues 129 to 138 (ARKEPRRESH) and 228 to 262 (ESDR…EKPV). In terms of domain architecture, Helicase ATP-binding spans 274-413 (VLEQAKSRNT…QEDCAIKIRN (140 aa)). Residue 287–294 (LETGAGKT) participates in ATP binding. The short motif at 358–361 (DECH) is the DECH box element. The interval 577 to 604 (KSETSDVEMQNTEKHNTNDLEEGELPDS) is disordered. Residues 629-789 (LIKILLKYQH…RTDLSHLDGT (161 aa)) enclose the Helicase C-terminal domain. Residues 817–912 (AVGLIHFYCS…LPDRGSGEGE (96 aa)) form the Dicer dsRNA-binding fold domain. The disordered stretch occupies residues 901–928 (TLLPDRGSGEGEKTEQNDEGEPLPGTAR). The segment covering 907-916 (GSGEGEKTEQ) has biased composition (basic and acidic residues). A PAZ domain is found at 1163-1296 (HFSDYQNQGK…LPPELCLVHP (134 aa)). 2 consecutive RNase III domains span residues 1320-1498 (LAVQ…VAGG) and 1538-1686 (FDTL…LDSG). Mg(2+) contacts are provided by Glu-1576, Asp-1672, and Glu-1675. 2 DRBM domains span residues 1712-1775 (HPVR…VLKE) and 1797-1872 (FTRQ…LLNR).

Belongs to the helicase family. Dicer subfamily. As to quaternary structure, may interact with ARGONAUTE1 or PINHEAD through their common PAZ domains. Mg(2+) is required as a cofactor. The cofactor is Mn(2+).

Its subcellular location is the nucleus. In terms of biological role, involved in the RNA silencing pathway. Cleaves double-stranded RNA to produce microRNAs (miRNAs) of 21-24 nucleotides which target the selective destruction of complementary RNAs. Regulates by this way the development of the plant. May not be involved in small interfering RNAs (siRNAs) production. This Oryza sativa subsp. japonica (Rice) protein is Endoribonuclease Dicer homolog 1 (DCL1).